A 620-amino-acid chain; its full sequence is 1-deoxy-D-xylulose-5-phosphate synthase (620 aa).

Residues His-80 and 121–123 (GHS) each bind thiamine diphosphate. Mg(2+) is bound at residue Asp-152. Thiamine diphosphate is bound by residues 153–154 (GA), Asn-181, Tyr-288, and Glu-370. Residue Asn-181 participates in Mg(2+) binding.

Belongs to the transketolase family. DXPS subfamily. In terms of assembly, homodimer. Requires Mg(2+) as cofactor. Thiamine diphosphate is required as a cofactor.

The enzyme catalyses D-glyceraldehyde 3-phosphate + pyruvate + H(+) = 1-deoxy-D-xylulose 5-phosphate + CO2. It participates in metabolic intermediate biosynthesis; 1-deoxy-D-xylulose 5-phosphate biosynthesis; 1-deoxy-D-xylulose 5-phosphate from D-glyceraldehyde 3-phosphate and pyruvate: step 1/1. Its function is as follows. Catalyzes the acyloin condensation reaction between C atoms 2 and 3 of pyruvate and glyceraldehyde 3-phosphate to yield 1-deoxy-D-xylulose-5-phosphate (DXP). This is 1-deoxy-D-xylulose-5-phosphate synthase from Escherichia coli O7:K1 (strain IAI39 / ExPEC).